The sequence spans 473 residues: uncharacterized protein (473 aa).

The signal sequence occupies residues 1-19; sequence MIRAFLVFPYLYILVQSNG.

This is an uncharacterized protein from Methanocaldococcus jannaschii (strain ATCC 43067 / DSM 2661 / JAL-1 / JCM 10045 / NBRC 100440) (Methanococcus jannaschii).